The following is a 392-amino-acid chain: Casein kinase II subunit alpha (392 aa).

The region spanning Y39 to F324 is the Protein kinase domain. Residues L45 to V53 and K68 each bind ATP. Residue D156 is the Proton acceptor of the active site. The segment at M334–G355 is disordered. Low complexity predominate over residues S337 to S354.

The protein belongs to the protein kinase superfamily. Ser/Thr protein kinase family. CK2 subfamily. Tetramer composed of an alpha chain, an alpha' and two beta chains.

It is found in the nucleus. The enzyme catalyses L-seryl-[protein] + ATP = O-phospho-L-seryl-[protein] + ADP + H(+). It carries out the reaction L-threonyl-[protein] + ATP = O-phospho-L-threonyl-[protein] + ADP + H(+). Functionally, catalytic subunit of a constitutively active serine/threonine-protein kinase complex that phosphorylates a large number of substrates containing acidic residues C-terminal to the phosphorylated serine or threonine. Regulates numerous cellular processes, such as cell cycle progression, apoptosis and transcription, as well as viral infection. May act as a regulatory node which integrates and coordinates numerous signals leading to an appropriate cellular response. During mitosis, functions as a component of the p53/TP53-dependent spindle assembly checkpoint (SAC) that maintains cyclin-B-CDK1 activity and G2 arrest in response to spindle damage. Can also negatively regulate apoptosis. Phosphorylates the caspases CASP9 and CASP2 and the apoptotic regulator NOL3. Phosphorylation protects CASP9 from cleavage and activation by CASP8, and inhibits the dimerization of CASP2 and activation of CASP8. Plays an important role in the circadian clock function by phosphorylating BMAL1. This Xenopus laevis (African clawed frog) protein is Casein kinase II subunit alpha (csnk2a1).